We begin with the raw amino-acid sequence, 214 residues long: Redox-sensing transcriptional repressor Rex (214 aa).

A DNA-binding region (H-T-H motif) is located at residues 17–56 (LYYRIFKRFHADQVEKASSKQIADAMGIDSATVRRDFSYF). 91–96 (GCGNIG) serves as a coordination point for NAD(+).

It belongs to the transcriptional regulatory Rex family. In terms of assembly, homodimer.

It is found in the cytoplasm. Functionally, modulates transcription in response to changes in cellular NADH/NAD(+) redox state. The protein is Redox-sensing transcriptional repressor Rex of Streptococcus pyogenes serotype M4 (strain MGAS10750).